The sequence spans 282 residues: uncharacterized protein (282 aa).

The region spanning T2–Q78 is the HTH rpiR-type domain. Positions V38–R57 form a DNA-binding region, H-T-H motif. Positions A122–N262 constitute an SIS domain.

This is an uncharacterized protein from Caldanaerobacter subterraneus subsp. tengcongensis (strain DSM 15242 / JCM 11007 / NBRC 100824 / MB4) (Thermoanaerobacter tengcongensis).